A 224-amino-acid polypeptide reads, in one-letter code: Octanoyltransferase (224 aa).

The BPL/LPL catalytic domain occupies 38–213 (AETTDEVWLL…QFVRAAGFQS (176 aa)). Substrate is bound by residues 77–84 (RGGQVTYH), 144–146 (SLG), and 157–159 (GLA). The Acyl-thioester intermediate role is filled by Cys175.

It belongs to the LipB family.

Its subcellular location is the cytoplasm. It carries out the reaction octanoyl-[ACP] + L-lysyl-[protein] = N(6)-octanoyl-L-lysyl-[protein] + holo-[ACP] + H(+). It participates in protein modification; protein lipoylation via endogenous pathway; protein N(6)-(lipoyl)lysine from octanoyl-[acyl-carrier-protein]: step 1/2. Functionally, catalyzes the transfer of endogenously produced octanoic acid from octanoyl-acyl-carrier-protein onto the lipoyl domains of lipoate-dependent enzymes. Lipoyl-ACP can also act as a substrate although octanoyl-ACP is likely to be the physiological substrate. The chain is Octanoyltransferase from Hahella chejuensis (strain KCTC 2396).